A 388-amino-acid chain; its full sequence is Trans-enoyl reductase tenC (388 aa).

51–54 (VDGK) is an NADP(+) binding site. A substrate-binding site is contributed by 142–149 (VGVASVGM). NADP(+) contacts are provided by residues 219-222 (SSES), Tyr-237, and 284-285 (LD). 304-308 (SFTQF) contacts substrate. An NADP(+)-binding site is contributed by 373–374 (IK).

The protein belongs to the zinc-containing alcohol dehydrogenase family. In terms of assembly, monomer.

Its pathway is secondary metabolite biosynthesis. Trans-enoyl reductase; part of the gene cluster that mediates the biosynthesis of tenellin-type 2-pyridones, iron-chelating compounds involved in iron stress tolerance, competition with the natural competitor fungus Metarhizium robertsii and insect hosts infection. TenC collaborates with the hybrid PKS-NRPS synthetase tenS to catalyze the assembly of the polyketide-amino acid backbone, since tenS lacks a designated enoylreductase (ER) domain. Upon formation of the polyketide backbone on the thiotemplate of tenS, the triketide is transferred to the NRPS module and linked to tyrosine to produce the pyrrolidine-2-dione intermediates, including pretellinin A, 11-hydropretellenin A, 12-hydropretellenin A, 13-hydropretellenin A, 14-hydropretellenin A, 12-oxopretellenin A and prototellinin D. The pathway begins with the assembly of the polyketide-amino acid backbone by the hybrid PKS-NRPS tenS with the help of the enoyl reductase tenC. These enzymes catalyze the synthesis of the pyrrolidine-2-dione intermediates pretellinin A, 11-hydropretellenin A, 12-hydropretellenin A, 13-hydropretellenin A, 14-hydropretellenin A, 12-oxopretellenin A and prototellinin D. The cytochrome P450 monooxygenase tenA then catalyzes an oxidative ring expansion of pretenellin A and 14-hydropretellenin A to form the 2-pyridone core, leading to pretenellin B and pyridovericin, respectively. The cytochrome P450 monooxygenase tenB is then required for the selective N-hydroxylation of the 2-pyridone nitrogen of yield tellinin and 15-hydroxytellenin (15-HT), respectively. The UDP-glucosyltransferase GT1 and the methyltransferase MT1, located outside the tenS gene cluster, contribute to the stepwise glycosylation and methylation of 15-HT to obtain the glycoside pyridovericin-N-O-(4-O-methyl-beta-D-glucopyranoside) (PMGP). Additional related compounds such as 1-O-methyl-15-HT, (8Z)-1-O-methyl-15-HT, and O-methyltenellin A are also produced but the enzymes involved in their biosynthesis have still to be determined. The polypeptide is Trans-enoyl reductase tenC (Beauveria bassiana (White muscardine disease fungus)).